A 224-amino-acid chain; its full sequence is UPF0173 metal-dependent hydrolase TTHA1283 (224 aa).

Belongs to the UPF0173 family.

This is UPF0173 metal-dependent hydrolase TTHA1283 from Thermus thermophilus (strain ATCC 27634 / DSM 579 / HB8).